The chain runs to 440 residues: Protein FPV117 (440 aa).

Belongs to the poxviruses G5 family.

This is Protein FPV117 from Fowlpox virus (strain NVSL) (FPV).